We begin with the raw amino-acid sequence, 1013 residues long: AP-2 complex subunit alpha-2 (1013 aa).

HEAT repeat units lie at residues 254–289 (AMRA…VVKN), 354–391 (DIIK…VSNA), 393–430 (DIVE…DLSW), and 521–565 (TVST…CIDV). Positions 652 to 676 (STDPESVARSLSHPNGTLSNIDPQT) are disordered. Polar residues predominate over residues 663–675 (SHPNGTLSNIDPQ). In terms of domain architecture, GAE spans 742-841 (ALCLKDSGVL…LDFSYKFGTN (100 aa)). Positions 760 to 1013 (GIKAEWRGHH…DPGAMLAGLL (254 aa)) are required for AP180 binding.

The protein belongs to the adaptor complexes large subunit family. As to quaternary structure, adaptor protein complex 2 (AP-2) is a heterotetramer composed of two large adaptins (alpha-type and beta-type subunits), a medium adaptin (mu-type subunit) and a small adaptin (sigma-type subunit). Interacts with AP180.

It localises to the membrane. Its subcellular location is the coated pit. In terms of biological role, subunit of the adaptor protein complex 2 (AP-2). Adaptor protein complexes function in protein transport via transport vesicles in different membrane traffic pathways. Adaptor protein complexes are vesicle coat components and appear to be involved in cargo selection and vesicle formation. AP-2 is involved in clathrin-dependent endocytosis in which cargo proteins are incorporated into vesicles surrounded by clathrin (clathrin-coated vesicles, CCVs) which are destined for fusion with the early endosome. The complex binds polyphosphoinositides. The polypeptide is AP-2 complex subunit alpha-2 (ALPHAC-AD) (Arabidopsis thaliana (Mouse-ear cress)).